A 172-amino-acid polypeptide reads, in one-letter code: Type IV secretion system putative outer membrane lipoprotein BRA0058/BS1330_II0058 (172 aa).

The signal sequence occupies residues 1-15; that stretch reads MRTLVMVACAVSLAA. A lipid anchor (N-palmitoyl cysteine) is attached at Cys-16. Cys-16 carries S-diacylglycerol cysteine lipidation. The region spanning 58 to 172 is the OmpA-like domain; that stretch reads WPARPPKQTV…RRVDIEILRK (115 aa).

Its subcellular location is the cell outer membrane. Its function is as follows. The VirB system could be required for the establishment of the replication niche in the host. The protein is Type IV secretion system putative outer membrane lipoprotein BRA0058/BS1330_II0058 of Brucella suis biovar 1 (strain 1330).